A 381-amino-acid polypeptide reads, in one-letter code: Nitric oxide reductase FlRd-NAD(+) reductase (381 aa).

The protein belongs to the FAD-dependent oxidoreductase family. FAD is required as a cofactor.

Its subcellular location is the cytoplasm. The catalysed reaction is 2 reduced [nitric oxide reductase rubredoxin domain] + NAD(+) + H(+) = 2 oxidized [nitric oxide reductase rubredoxin domain] + NADH. Its pathway is nitrogen metabolism; nitric oxide reduction. Its function is as follows. One of at least two accessory proteins for anaerobic nitric oxide (NO) reductase. Reduces the rubredoxin moiety of NO reductase. This chain is Nitric oxide reductase FlRd-NAD(+) reductase, found in Aliivibrio fischeri (strain ATCC 700601 / ES114) (Vibrio fischeri).